We begin with the raw amino-acid sequence, 402 residues long: Zinc finger CCHC domain-containing protein 12 (402 aa).

Residues 308–341 (IDSPHNSRAQFPSTSGGSGYKNNGPGEMRRARKR) form a disordered region. Residues 311–322 (PHNSRAQFPSTS) are compositionally biased toward polar residues. The segment at 345 to 362 (IRCSYCGEEGHSKETCDN) adopts a CCHC-type zinc-finger fold.

This sequence belongs to the ZCCHC12 family. In terms of assembly, interacts with SMAD1 and CREB-binding protein (CBP). Forms a protein-DNA complex through its association with SMAD1.

Functionally, transcriptional coactivator in the bone morphogenetic protein (BMP)-signaling pathway. It positively modulates BMP signaling by interacting with SMAD1 and associating with CBP in the transcription complex. It contributes to the BMP-induced enhancement of cholinergic-neuron-specific gene expression. The protein is Zinc finger CCHC domain-containing protein 12 (ZCCHC12) of Homo sapiens (Human).